A 509-amino-acid chain; its full sequence is Glycerol kinase (509 aa).

Threonine 12 serves as a coordination point for ADP. ATP-binding residues include threonine 12, threonine 13, and serine 14. Residue threonine 12 coordinates sn-glycerol 3-phosphate. An ADP-binding site is contributed by arginine 16. 4 residues coordinate sn-glycerol 3-phosphate: arginine 82, glutamate 83, tyrosine 134, and aspartate 245. Residues arginine 82, glutamate 83, tyrosine 134, aspartate 245, and glutamine 246 each contribute to the glycerol site. Residues threonine 267 and glycine 311 each coordinate ADP. 4 residues coordinate ATP: threonine 267, glycine 311, glutamine 315, and glycine 412. ADP contacts are provided by glycine 412 and asparagine 416.

The protein belongs to the FGGY kinase family.

The catalysed reaction is glycerol + ATP = sn-glycerol 3-phosphate + ADP + H(+). It functions in the pathway polyol metabolism; glycerol degradation via glycerol kinase pathway; sn-glycerol 3-phosphate from glycerol: step 1/1. With respect to regulation, inhibited by fructose 1,6-bisphosphate (FBP). Key enzyme in the regulation of glycerol uptake and metabolism. Catalyzes the phosphorylation of glycerol to yield sn-glycerol 3-phosphate. In Rhizorhabdus wittichii (strain DSM 6014 / CCUG 31198 / JCM 15750 / NBRC 105917 / EY 4224 / RW1) (Sphingomonas wittichii), this protein is Glycerol kinase.